The primary structure comprises 702 residues: MARTTPISRYRNIGISAHIDAGKTTTTERILFYTGVNHKIGEVHDGAATMDWMEQEQERGITITSAATTAFWSGMAKQFEPHRINIIDTPGHVDFTIEVERSMRVLDGAVMVYCAVGGVQPQSETVWRQANKYHVPRIAFVNKMDRMGANFLKVVNQIKTRLGANPVPLQLAIGAEEAFTGIVDLVKMKAINWNEADQGVTFTYEDIPADMVELANEWHQFLVESAAEASEELMDKYLGGETLSEEEIKNALRQRVLNNEIILVTCGSAFKNKGVQAMLDAVIEYLPSPTDVPAIKGILDDGKDTPAERHSDDNEPFAALAFKIATDPFVGNLTFFRVYSGVVNSGDTVLNSVKSARERFGRIVQMHANKREEIKEVRAGDIAAAIGLKDVTTGDTLCDQNAPIILERMEFPEPVISIAVEPKTKADQEKMGLALGRLAKEDPSFRVRTDEESNQTIISGMGELHLEIIVDRMKREFNVEANVGKPQVAYRETIRDTVKDVEGKHAKQSGGRGQYGHVVIDMFPLEPGGEGYTFTNDIKGGVIPGEYIPAVDKGIQEQLKSGPMAGYPVVDLGVRLHFGSYHDVDSSELAFKLAASLAFKEAFKRAKPVLLEPIMKVEVETPEDYMGDVIGDLNRRRGMIEGMEDTATGKTVRAQVPLSEMFGYATDLRSQTQGRASYSMEFLKYAEAPTNVAQAVIEARGK.

One can recognise a tr-type G domain in the interval 8-290 (SRYRNIGISA…AVIEYLPSPT (283 aa)). GTP contacts are provided by residues 17–24 (AHIDAGKT), 88–92 (DTPGH), and 142–145 (NKMD).

The protein belongs to the TRAFAC class translation factor GTPase superfamily. Classic translation factor GTPase family. EF-G/EF-2 subfamily.

The protein resides in the cytoplasm. Its function is as follows. Catalyzes the GTP-dependent ribosomal translocation step during translation elongation. During this step, the ribosome changes from the pre-translocational (PRE) to the post-translocational (POST) state as the newly formed A-site-bound peptidyl-tRNA and P-site-bound deacylated tRNA move to the P and E sites, respectively. Catalyzes the coordinated movement of the two tRNA molecules, the mRNA and conformational changes in the ribosome. The polypeptide is Elongation factor G (Edwardsiella ictaluri (strain 93-146)).